We begin with the raw amino-acid sequence, 99 residues long: Aspartyl/glutamyl-tRNA(Asn/Gln) amidotransferase subunit C (99 aa).

Belongs to the GatC family. As to quaternary structure, heterotrimer of A, B and C subunits.

It carries out the reaction L-glutamyl-tRNA(Gln) + L-glutamine + ATP + H2O = L-glutaminyl-tRNA(Gln) + L-glutamate + ADP + phosphate + H(+). The enzyme catalyses L-aspartyl-tRNA(Asn) + L-glutamine + ATP + H2O = L-asparaginyl-tRNA(Asn) + L-glutamate + ADP + phosphate + 2 H(+). Functionally, allows the formation of correctly charged Asn-tRNA(Asn) or Gln-tRNA(Gln) through the transamidation of misacylated Asp-tRNA(Asn) or Glu-tRNA(Gln) in organisms which lack either or both of asparaginyl-tRNA or glutaminyl-tRNA synthetases. The reaction takes place in the presence of glutamine and ATP through an activated phospho-Asp-tRNA(Asn) or phospho-Glu-tRNA(Gln). This is Aspartyl/glutamyl-tRNA(Asn/Gln) amidotransferase subunit C from Rhodococcus erythropolis (strain PR4 / NBRC 100887).